The primary structure comprises 364 residues: O-methyltransferase ZRP4 (364 aa).

5 residues coordinate S-adenosyl-L-methionine: Gly-208, Asp-231, Asp-251, Met-252, and Lys-265. The active-site Proton acceptor is His-269.

It belongs to the class I-like SAM-binding methyltransferase superfamily. Cation-independent O-methyltransferase family. COMT subfamily. As to quaternary structure, homodimer. As to expression, accumulates preferentially in the roots and is located predominantly in the region of the endodermis, low levels are seen in the leaves, stems and other shoot organs.

In terms of biological role, may be involved in the O-methylation of suberin phenylpropanoid precursors. The protein is O-methyltransferase ZRP4 (ZRP4) of Zea mays (Maize).